The chain runs to 100 residues: Urease subunit gamma (100 aa).

It belongs to the urease gamma subunit family. Heterotrimer of UreA (gamma), UreB (beta) and UreC (alpha) subunits. Three heterotrimers associate to form the active enzyme.

The protein resides in the cytoplasm. It catalyses the reaction urea + 2 H2O + H(+) = hydrogencarbonate + 2 NH4(+). Its pathway is nitrogen metabolism; urea degradation; CO(2) and NH(3) from urea (urease route): step 1/1. The polypeptide is Urease subunit gamma (Prochlorococcus marinus (strain MIT 9312)).